Here is a 310-residue protein sequence, read N- to C-terminus: Calcium homeostasis modulator protein 5 (310 aa).

Helical transmembrane passes span 17–37, 49–69, 101–121, and 181–201; these read TIGYSVMAILTIGSERIFSMV, FPYGICFLLGPAVVLLVVGFF, LIKVLYGACVAPVMWLTVALL, and QILGWSVIITAVVIALIGTCY.

The protein belongs to the CALHM family.

Its subcellular location is the membrane. In terms of biological role, pore-forming subunit of a voltage-gated ion channel. This Danio rerio (Zebrafish) protein is Calcium homeostasis modulator protein 5 (calhm5.1).